A 338-amino-acid chain; its full sequence is Holliday junction branch migration complex subunit RuvB (338 aa).

The interval methionine 1–tyrosine 179 is large ATPase domain (RuvB-L). Residues leucine 18, arginine 19, glycine 60, lysine 63, threonine 64, threonine 65, arginine 169, tyrosine 179, and arginine 216 each contribute to the ATP site. Threonine 64 is a binding site for Mg(2+). The interval threonine 180–glutamate 250 is small ATPAse domain (RuvB-S). The interval alanine 253–lysine 338 is head domain (RuvB-H). The DNA site is built by arginine 289, arginine 308, and arginine 313.

This sequence belongs to the RuvB family. In terms of assembly, homohexamer. Forms an RuvA(8)-RuvB(12)-Holliday junction (HJ) complex. HJ DNA is sandwiched between 2 RuvA tetramers; dsDNA enters through RuvA and exits via RuvB. An RuvB hexamer assembles on each DNA strand where it exits the tetramer. Each RuvB hexamer is contacted by two RuvA subunits (via domain III) on 2 adjacent RuvB subunits; this complex drives branch migration. In the full resolvosome a probable DNA-RuvA(4)-RuvB(12)-RuvC(2) complex forms which resolves the HJ.

The protein localises to the cytoplasm. The enzyme catalyses ATP + H2O = ADP + phosphate + H(+). The RuvA-RuvB-RuvC complex processes Holliday junction (HJ) DNA during genetic recombination and DNA repair, while the RuvA-RuvB complex plays an important role in the rescue of blocked DNA replication forks via replication fork reversal (RFR). RuvA specifically binds to HJ cruciform DNA, conferring on it an open structure. The RuvB hexamer acts as an ATP-dependent pump, pulling dsDNA into and through the RuvAB complex. RuvB forms 2 homohexamers on either side of HJ DNA bound by 1 or 2 RuvA tetramers; 4 subunits per hexamer contact DNA at a time. Coordinated motions by a converter formed by DNA-disengaged RuvB subunits stimulates ATP hydrolysis and nucleotide exchange. Immobilization of the converter enables RuvB to convert the ATP-contained energy into a lever motion, pulling 2 nucleotides of DNA out of the RuvA tetramer per ATP hydrolyzed, thus driving DNA branch migration. The RuvB motors rotate together with the DNA substrate, which together with the progressing nucleotide cycle form the mechanistic basis for DNA recombination by continuous HJ branch migration. Branch migration allows RuvC to scan DNA until it finds its consensus sequence, where it cleaves and resolves cruciform DNA. The chain is Holliday junction branch migration complex subunit RuvB from Sphingopyxis alaskensis (strain DSM 13593 / LMG 18877 / RB2256) (Sphingomonas alaskensis).